The following is a 1140-amino-acid chain: Eukaryotic translation initiation factor 3 subunit A (1140 aa).

In terms of domain architecture, PCI spans 319–502; it reads LQRMAAHVLL…NSIYFGTDLT (184 aa). Basic and acidic residues-rich tracts occupy residues 589-624, 830-900, and 921-984; these read QNNA…EERE, AAEE…RGGD, and ERND…EPDS. Disordered stretches follow at residues 589–632 and 830–1140; these read QNNA…QNEI and AAEE…VKRR. The span at 987-998 shows a compositional bias: low complexity; it reads AAGAKDAGGAPA. Composition is skewed to basic and acidic residues over residues 999 to 1050, 1058 to 1086, and 1109 to 1130; these read SRDD…EPQR, DAPR…RGDQ, and PRDE…KGGD.

The protein belongs to the eIF-3 subunit A family. In terms of assembly, component of the eukaryotic translation initiation factor 3 (eIF-3) complex. The eIF-3 complex interacts with pix.

It is found in the cytoplasm. In terms of biological role, RNA-binding component of the eukaryotic translation initiation factor 3 (eIF-3) complex, which is involved in protein synthesis of a specialized repertoire of mRNAs and, together with other initiation factors, stimulates binding of mRNA and methionyl-tRNAi to the 40S ribosome. The eIF-3 complex specifically targets and initiates translation of a subset of mRNAs involved in cell proliferation. In Drosophila ananassae (Fruit fly), this protein is Eukaryotic translation initiation factor 3 subunit A.